The following is a 229-amino-acid chain: MKLSFHGQSTIYLEGNNKKVIVDPFISNNPKCDLNIETVQVDYIVLTHGHFDHFGDVVELAKKTEATVIGSAEMADYLSSYHGVENVHGMNIGGKANFDFGSVKFVQAFHSSSFTHENGIPVYLGMPMGIVFEVEGKTIYHTGDTGLFSDMSLIAKRHPVDVCFVPIGDNFTMGIDDASYAINEFIKPKISVPIHYDTFPLIEQDPQQFKDAVNVGDVQILKPGESVQF.

This sequence belongs to the UPF0173 family.

This Staphylococcus aureus (strain MRSA252) protein is UPF0173 metal-dependent hydrolase SAR1785.